The chain runs to 131 residues: MSNDNKRLPIGKDIATRRRVARKARHFRIRKNLRGTAEIPRLVVHRTSRHMHVQVIDDTIGHTLAAASSIEPEVRAMEGDKKARGAKVGELIAERAKAKGIETVKFDRGGYKYHGRVAALADAAREGGLKF.

It belongs to the universal ribosomal protein uL18 family. Part of the 50S ribosomal subunit; part of the 5S rRNA/L5/L18/L25 subcomplex. Contacts the 5S and 23S rRNAs.

In terms of biological role, this is one of the proteins that bind and probably mediate the attachment of the 5S RNA into the large ribosomal subunit, where it forms part of the central protuberance. The protein is Large ribosomal subunit protein uL18 of Corynebacterium kroppenstedtii (strain DSM 44385 / JCM 11950 / CIP 105744 / CCUG 35717).